The chain runs to 201 residues: Dephospho-CoA kinase (201 aa).

In terms of domain architecture, DPCK spans 3–201 (VIGLTGGIAS…WKERIEKNPR (199 aa)). 11–16 (ASGKST) is an ATP binding site.

Belongs to the CoaE family.

Its subcellular location is the cytoplasm. It carries out the reaction 3'-dephospho-CoA + ATP = ADP + CoA + H(+). It functions in the pathway cofactor biosynthesis; coenzyme A biosynthesis; CoA from (R)-pantothenate: step 5/5. Catalyzes the phosphorylation of the 3'-hydroxyl group of dephosphocoenzyme A to form coenzyme A. The chain is Dephospho-CoA kinase from Geobacter metallireducens (strain ATCC 53774 / DSM 7210 / GS-15).